The sequence spans 136 residues: Sec-independent protein translocase protein TatB (136 aa).

A helical membrane pass occupies residues 2–22 (FGSVGWGELLVLLIVGLVVLG). A disordered region spans residues 107–136 (VTEPAPTPIVNPELAKPAEPGPTRYDADAT).

It belongs to the TatB family. In terms of assembly, the Tat system comprises two distinct complexes: a TatABC complex, containing multiple copies of TatA, TatB and TatC subunits, and a separate TatA complex, containing only TatA subunits. Substrates initially bind to the TatABC complex, which probably triggers association of the separate TatA complex to form the active translocon.

It localises to the cell membrane. In terms of biological role, part of the twin-arginine translocation (Tat) system that transports large folded proteins containing a characteristic twin-arginine motif in their signal peptide across membranes. Together with TatC, TatB is part of a receptor directly interacting with Tat signal peptides. TatB may form an oligomeric binding site that transiently accommodates folded Tat precursor proteins before their translocation. The chain is Sec-independent protein translocase protein TatB from Mycobacteroides abscessus (strain ATCC 19977 / DSM 44196 / CCUG 20993 / CIP 104536 / JCM 13569 / NCTC 13031 / TMC 1543 / L948) (Mycobacterium abscessus).